A 64-amino-acid polypeptide reads, in one-letter code: Copper-metallothionein (64 aa).

Ser-1 carries the N-acetylserine modification. Residues Cys-7, Cys-11, Cys-16, Cys-18, Cys-22, Cys-24, Cys-28, Cys-30, Cys-33, Cys-36, Cys-38, Cys-43, Cys-45, Cys-49, Cys-55, Cys-57, Cys-61, and Cys-63 each contribute to the Cu(+) site.

This sequence belongs to the metallothionein superfamily. Type 2 family.

The metallothioneins are involved in the cellular sequestration of toxic metal ions and regulation of essential trace elements. This isoform binds exclusively copper. The polypeptide is Copper-metallothionein (Helix pomatia (Roman snail)).